The primary structure comprises 587 residues: Serine/threonine-protein phosphatase 2A 65 kDa regulatory subunit A gamma isoform (587 aa).

The residue at position 2 (serine 2) is an N-acetylserine. 14 HEAT repeats span residues 2–42 (SMVD…ALGE), 44–80 (RTRK…YVGG), 81–119 (VEYA…QMRE), 158–194 (DVLK…AATI), 197–235 (AHLK…LLEP), 236–274 (QDCV…AVGP), 276–313 (PTRT…ILNP), 314–352 (ELAI…VLGK), 353–391 (DATI…VIGI), 393–430 (LLSQ…QLGV), 432–469 (FFDE…EFGP), 470–508 (EWAM…VMGS), 509–547 (EITC…IVDQ), and 549–586 (VVEN…VMMS).

It belongs to the phosphatase 2A regulatory subunit A family. As to quaternary structure, PP2A consists of a common heterodimeric core enzyme, composed of a 36 kDa catalytic subunit (subunit C) and a 65 kDa constant regulatory subunit (subunit A), that associates with a variety of regulatory subunits such as subunits B (the R2/B/PR55/B55, R3/B''/PR72/PR130/PR59 and R5/B'/B56 families). Interacts with CHIP. Interacts with SRK2E/OST1. Ubiquitinated. CHIP-mediated ubiquitination enhances phosphatase activity after an abiotic stress such as low temperature or darkness. Expressed ubiquitously at stable levels. However, higher protein levels in roots and flowers (at protein level).

Its subcellular location is the cytoplasm. It is found in the cytosol. The protein resides in the nucleus. Its function is as follows. The A subunit of protein phosphatase 2A serves as a scaffolding molecule to coordinate the assembly of the catalytic subunit and a variable regulatory B subunit. Involved during developmental process such as seedling and floral developments. Seems to act as a negative regulator of PP2A catalytic activity. This is Serine/threonine-protein phosphatase 2A 65 kDa regulatory subunit A gamma isoform (PP2AA3) from Arabidopsis thaliana (Mouse-ear cress).